Consider the following 296-residue polypeptide: Nucleotide-binding protein stu0831 (296 aa).

Gly13–Thr20 is an ATP binding site. Asp63–Ser66 is a GTP binding site.

The protein belongs to the RapZ-like family.

Its function is as follows. Displays ATPase and GTPase activities. The chain is Nucleotide-binding protein stu0831 from Streptococcus thermophilus (strain ATCC BAA-250 / LMG 18311).